Here is a 407-residue protein sequence, read N- to C-terminus: MSAVPLKNDGAAHAGVRTISVLGATGSIGDSTMDLLRAAPEKYRVESLTGNANVAGLAKLAKEFSAKFVAVADPARLGELRAALADTEIACGAGESAVIEAASRPADWVMAAISGAAGLKPALAAVDRGATVALANKECLVCAGDFFMSRAVAAGARILPADSEHNALFQALASGNRHELTRVIITASGGPFRTWAAADIEQATLAQALKHPNWSMGQKITIDSASMMNKGLEVIEASYLFALSPDEIDVLVHPQSIVHGLVEFADHSVVAQLGAPDMRIPIAHCLGWPDRIAGRAARLDLAKIGQLTFEAPDFVRFPGLRLAYDALRTGNGATTVYNAANEIAVAAFIAQKIRFGAIARLVEDTLNGWVRAGNLAPLSSADDAIAVDHNARKMAATLLPQIAAKAS.

The NADPH site is built by Thr25, Gly26, Ser27, Ile28, Asn53, and Asn136. Lys137 provides a ligand contact to 1-deoxy-D-xylulose 5-phosphate. Glu138 lines the NADPH pocket. Asp162 is a Mn(2+) binding site. Positions 163, 164, 188, and 211 each coordinate 1-deoxy-D-xylulose 5-phosphate. A Mn(2+)-binding site is contributed by Glu164. Residue Gly217 participates in NADPH binding. 1-deoxy-D-xylulose 5-phosphate-binding residues include Ser224, Asn229, Lys230, and Glu233. Glu233 contacts Mn(2+).

The protein belongs to the DXR family. It depends on Mg(2+) as a cofactor. Mn(2+) serves as cofactor.

It carries out the reaction 2-C-methyl-D-erythritol 4-phosphate + NADP(+) = 1-deoxy-D-xylulose 5-phosphate + NADPH + H(+). The protein operates within isoprenoid biosynthesis; isopentenyl diphosphate biosynthesis via DXP pathway; isopentenyl diphosphate from 1-deoxy-D-xylulose 5-phosphate: step 1/6. Functionally, catalyzes the NADPH-dependent rearrangement and reduction of 1-deoxy-D-xylulose-5-phosphate (DXP) to 2-C-methyl-D-erythritol 4-phosphate (MEP). In Rhodopseudomonas palustris (strain BisB5), this protein is 1-deoxy-D-xylulose 5-phosphate reductoisomerase.